Consider the following 275-residue polypeptide: Hydroxyethylthiazole kinase (275 aa).

Position 50 (methionine 50) interacts with substrate. ATP-binding residues include arginine 126 and serine 171. Alanine 200 contacts substrate.

Belongs to the Thz kinase family. The cofactor is Mg(2+).

It carries out the reaction 5-(2-hydroxyethyl)-4-methylthiazole + ATP = 4-methyl-5-(2-phosphooxyethyl)-thiazole + ADP + H(+). The protein operates within cofactor biosynthesis; thiamine diphosphate biosynthesis; 4-methyl-5-(2-phosphoethyl)-thiazole from 5-(2-hydroxyethyl)-4-methylthiazole: step 1/1. Catalyzes the phosphorylation of the hydroxyl group of 4-methyl-5-beta-hydroxyethylthiazole (THZ). The polypeptide is Hydroxyethylthiazole kinase (Acinetobacter baumannii (strain ATCC 17978 / DSM 105126 / CIP 53.77 / LMG 1025 / NCDC KC755 / 5377)).